Here is a 339-residue protein sequence, read N- to C-terminus: Dihydroorotate dehydrogenase (quinone) (339 aa).

Residues 62–66 (AGLDK) and T86 contribute to the FMN site. K66 lines the substrate pocket. 111-115 (NRMGF) lines the substrate pocket. FMN is bound by residues N139 and N172. Residue N172 participates in substrate binding. The Nucleophile role is filled by S175. N177 is a substrate binding site. 2 residues coordinate FMN: K217 and T245. 246–247 (NT) contributes to the substrate binding site. FMN-binding positions include G268, G297, and 318–319 (YS).

The protein belongs to the dihydroorotate dehydrogenase family. Type 2 subfamily. As to quaternary structure, monomer. It depends on FMN as a cofactor.

Its subcellular location is the cell membrane. It catalyses the reaction (S)-dihydroorotate + a quinone = orotate + a quinol. It functions in the pathway pyrimidine metabolism; UMP biosynthesis via de novo pathway; orotate from (S)-dihydroorotate (quinone route): step 1/1. Its function is as follows. Catalyzes the conversion of dihydroorotate to orotate with quinone as electron acceptor. This is Dihydroorotate dehydrogenase (quinone) from Shewanella frigidimarina (strain NCIMB 400).